The sequence spans 310 residues: Small ribosomal subunit biogenesis GTPase RsgA (310 aa).

A CP-type G domain is found at 77 to 238; sequence LSKQSHILAA…IIDTPGIKGF (162 aa). GTP is bound by residues 126 to 129 and 180 to 188; these read NKVD and GHSGVGKST. Zn(2+)-binding residues include Cys-262, Cys-267, His-269, and Cys-275.

The protein belongs to the TRAFAC class YlqF/YawG GTPase family. RsgA subfamily. In terms of assembly, monomer. Associates with 30S ribosomal subunit, binds 16S rRNA. The cofactor is Zn(2+).

Its subcellular location is the cytoplasm. One of several proteins that assist in the late maturation steps of the functional core of the 30S ribosomal subunit. Helps release RbfA from mature subunits. May play a role in the assembly of ribosomal proteins into the subunit. Circularly permuted GTPase that catalyzes slow GTP hydrolysis, GTPase activity is stimulated by the 30S ribosomal subunit. This chain is Small ribosomal subunit biogenesis GTPase RsgA, found in Bacteroides fragilis (strain YCH46).